Consider the following 802-residue polypeptide: Ent-copalyl diphosphate synthase, chloroplastic (802 aa).

Residues 1–60 (MSLQYHVLNSIPSTTFLSSTKTTISSSFLTISGSPLNVARDKSRSGSIHCSKLRTQEYIN) constitute a chloroplast transit peptide. Lysine 245 is a substrate binding site. 2 residues coordinate Mg(2+): aspartate 377 and aspartate 379. A DXDD motif motif is present at residues 377–380 (DIDD). Lysine 463 provides a ligand contact to substrate.

Belongs to the terpene synthase family. Tpsc subfamily. Mg(2+) serves as cofactor. In terms of processing, the N-terminus is blocked. As to expression, expressed in roots, leaves, flowers and also in siliques.

Its subcellular location is the plastid. The protein resides in the chloroplast. The catalysed reaction is (2E,6E,10E)-geranylgeranyl diphosphate = ent-copalyl diphosphate. It functions in the pathway plant hormone biosynthesis; gibberellin biosynthesis. With respect to regulation, inhibited by high concentrations of magnesium. In terms of biological role, catalyzes the conversion of geranylgeranyl diphosphate to the gibberellin precursor ent-copalyl diphosphate. The chain is Ent-copalyl diphosphate synthase, chloroplastic (GA1) from Arabidopsis thaliana (Mouse-ear cress).